Consider the following 286-residue polypeptide: Beta-lactamase SHV-1 (286 aa).

An N-terminal signal peptide occupies residues 1–21 (MRYIRLCIISLLATLPLAVHA). The active-site Acyl-ester intermediate is S66. The cysteines at positions 73 and 119 are disulfide-linked. The Proton acceptor role is filled by E164. Substrate is bound at residue 230 to 232 (KTG).

It belongs to the class-A beta-lactamase family.

The catalysed reaction is a beta-lactam + H2O = a substituted beta-amino acid. The chain is Beta-lactamase SHV-1 (bla) from Escherichia coli.